The chain runs to 121 residues: Cell division protein FtsB (121 aa).

The Cytoplasmic portion of the chain corresponds to 1 to 6 (MRNWRW). Residues 7–24 (LLLVLAVLLAWLQYRFWF) traverse the membrane as a helical segment. Over 25-121 (GPGNSGEVMM…PEPIDPVDHP (97 aa)) the chain is Periplasmic. A coiled-coil region spans residues 31 to 66 (EVMMLEAQVAHQTQDNEGLRQRNQALAAEVKDLKDG). Residues 92 to 121 (EDAPLPAPASPEAPAPPQQAPEPIDPVDHP) form a disordered region. Pro residues predominate over residues 96–115 (LPAPASPEAPAPPQQAPEPI).

It belongs to the FtsB family. Part of a complex composed of FtsB, FtsL and FtsQ.

It is found in the cell inner membrane. Its function is as follows. Essential cell division protein. May link together the upstream cell division proteins, which are predominantly cytoplasmic, with the downstream cell division proteins, which are predominantly periplasmic. This is Cell division protein FtsB from Xanthomonas euvesicatoria pv. vesicatoria (strain 85-10) (Xanthomonas campestris pv. vesicatoria).